Consider the following 111-residue polypeptide: Antitoxin PrlF (111 aa).

In terms of domain architecture, SpoVT-AbrB spans 12-59 (TTESKVTIRGQTTIPAPVREALKLKPGQDSIHYEILPGGQVFMCRLGD).

In terms of assembly, homodimer; forms a complex with YhaV with stoichiometry PrlF(2)-YhaV(4), possibly as a YhaV(2)-PrlF(2)-YhaV(2) complex like the MazFE complex. This complex is seen to dimerize in solution.

It is found in the cytoplasm. Its function is as follows. Antitoxin component of a type II toxin-antitoxin (TA) system. Labile antitoxin that binds to the YhaV toxin and neutralizes its ribonuclease activity. Also acts as a transcription factor. The YhaV/PrlF complex binds the prlF-yhaV operon, probably negatively regulating its expression. Functionally, negatively regulates its own expression as well as relieving the export block imposed by high-level synthesis of the LamB-LacZ hybrid protein. Overexpression leads to increased doubling time and also suppresses a htrA (degP) null phenotype. This Escherichia coli (strain K12) protein is Antitoxin PrlF (prlF).